Here is a 412-residue protein sequence, read N- to C-terminus: DNA primase DnaG (412 aa).

The Toprim domain maps to 165–243 (PELIIVEGRA…KLDYVARAPT (79 aa)). Mg(2+) is bound by residues Glu-171, Asp-216, and Asp-218.

It belongs to the archaeal DnaG primase family. Forms a ternary complex with MCM helicase and DNA. Component of the archaeal exosome complex. It depends on Mg(2+) as a cofactor.

It carries out the reaction ssDNA + n NTP = ssDNA/pppN(pN)n-1 hybrid + (n-1) diphosphate.. Functionally, RNA polymerase that catalyzes the synthesis of short RNA molecules used as primers for DNA polymerase during DNA replication. Also part of the exosome, which is a complex involved in RNA degradation. Acts as a poly(A)-binding protein that enhances the interaction between heteromeric, adenine-rich transcripts and the exosome. The polypeptide is DNA primase DnaG (Sulfolobus acidocaldarius (strain ATCC 33909 / DSM 639 / JCM 8929 / NBRC 15157 / NCIMB 11770)).